A 127-amino-acid polypeptide reads, in one-letter code: Large ribosomal subunit protein bL12 (127 aa).

It belongs to the bacterial ribosomal protein bL12 family. In terms of assembly, homodimer. Part of the ribosomal stalk of the 50S ribosomal subunit. Forms a multimeric L10(L12)X complex, where L10 forms an elongated spine to which 2 to 4 L12 dimers bind in a sequential fashion. Binds GTP-bound translation factors.

Functionally, forms part of the ribosomal stalk which helps the ribosome interact with GTP-bound translation factors. Is thus essential for accurate translation. This is Large ribosomal subunit protein bL12 from Phytoplasma mali (strain AT).